The sequence spans 247 residues: Centromere protein H (247 aa).

An N-acetylmethionine modification is found at Met1. Over residues 1-14 the composition is skewed to acidic residues; sequence MEEQPQMQDADEPA. The tract at residues 1–34 is disordered; that stretch reads MEEQPQMQDADEPADSGGEGRAGGPPQVAGAQAA. Residue Ser16 is modified to Phosphoserine. Positions 24-34 are enriched in low complexity; that stretch reads GPPQVAGAQAA. Residues 47–192 are a coiled coil; it reads RAQTKQQLLE…KIDLDSMENS (146 aa). Residue Lys67 forms a Glycyl lysine isopeptide (Lys-Gly) (interchain with G-Cter in SUMO2) linkage. Thr68 carries the post-translational modification Phosphothreonine.

The protein belongs to the CENP-H/MCM16 family. In terms of assembly, self-associates. Component of the CENPA-NAC complex, at least composed of CENPA, CENPC, CENPH, CENPM, CENPN, CENPT and CENPU. The CENPA-NAC complex interacts with the CENPA-CAD complex, composed of CENPI, CENPK, CENPL, CENPO, CENPP, CENPQ, CENPR and CENPS. Interacts directly with CENPK. Interacts with KIF2C and NDC80. Interacts with TRIM36.

It is found in the nucleus. The protein localises to the chromosome. Its subcellular location is the centromere. It localises to the kinetochore. Its function is as follows. Component of the CENPA-NAC (nucleosome-associated) complex, a complex that plays a central role in assembly of kinetochore proteins, mitotic progression and chromosome segregation. The CENPA-NAC complex recruits the CENPA-CAD (nucleosome distal) complex and may be involved in incorporation of newly synthesized CENPA into centromeres. Required for chromosome congression and efficiently align the chromosomes on a metaphase plate. The chain is Centromere protein H from Homo sapiens (Human).